Reading from the N-terminus, the 306-residue chain is Meiotically up-regulated gene 73 protein (306 aa).

7 helical membrane passes run 28 to 48 (YWAVFAVFLLCAIVFPLVSIF), 59 to 79 (FFSILSLVSCLAYFTMACNYG), 103 to 123 (YIQWLINFPLIIVMLHWTVGV), 125 to 145 (ILEIAYVVCYVLFAIVCLLAA), 154 to 174 (WAYYGFSFVGYFIALAHSVVL), 190 to 210 (FLWSIVYLHVIWFLYYACWIL), and 224 to 244 (IFYSILDLFEFGFFGAAFSWM).

Belongs to the archaeal/bacterial/fungal opsin family.

Its subcellular location is the membrane. In terms of biological role, has a role in meiosis. This chain is Meiotically up-regulated gene 73 protein (mug73), found in Schizosaccharomyces pombe (strain 972 / ATCC 24843) (Fission yeast).